The following is a 933-amino-acid chain: MTTGFLQKIFGSRNQRLVKQYQKTVATINALETQIEKLTDDQLRGKTDEFRQRVAAGESLDKLLPEAFAVCREASRRVLKMRHFDVQMIGGMVLHYGKIAEMRTGEGKTLVATLPVYLNALAGRGVHVVTVNDYLAQRDAEWMARLYNFLGLSVGINLSGMEHDQKQQAYAADITYGTNNEFGFDYLRDNMVYETDARVQRALNFAVVDEVDSILIDEARTPLIISGQAEDHTELYVRMNALPPLLERQIGEEKADGTGVEKPGDYTLDEKARQVFLTESGHEKAERLLAEWGLIGEGESLYAPQNITLMHHVYAALRAHTLFHKDQHYVVQNGEVVIVDEFTGRLMAGRRWSDGLHQAVEAKEHVKIQSENQTLASITFQNYFRMYAKLAGMTGTADTEAYEFNEIYGLETVVIPTNRPPKRIDKQDQIYKTAKERYDAVIRDIRDCYERGQPVLVGTTSIENSELLSHLLKQAGLPHEVLNAKQHEREAAIVAEAGRPKRITIATNMAGRGTDIVLGGNAEKQAAFIEADDSIPADEKARRIQKLHDEWETLHEEVKAAGGLHIIGTERHESRRIDNQLRGRAGRQGDPGSSRFYLSLDDPLLRIFAGDRVRSIMDRLKMPEGEAIEAGIVTRSIESAQRKVEARNFDIRKQLLEYDDVSNDQRKVIYQQRNELLEAHDITETITAMRHGVITEVVRQFVPEGSIEEQWDVPELEEALRNDWQLDLAIQEMVNESSSITAEEILDAVTTAADEQYEAKVAMVGRESFSAFERSVMLQTVDRLWREHLAALDHLRQGIHLRGYAQKNPKQEYKREAFELFAAMLDAIKQEVTRIVMNVQIQSPEQLEEAAEQIEERGGHLENVEYQHADYADAGAPVANVTTAAAAATATADMVGSAMTHGGPGGEMPKVGRNDPCPCGSGKKYKQCHGKLS.

ATP-binding positions include glutamine 87, 105–109 (GEGKT), and aspartate 515. Residues cysteine 917, cysteine 919, cysteine 928, and histidine 929 each coordinate Zn(2+).

Belongs to the SecA family. As to quaternary structure, monomer and homodimer. Part of the essential Sec protein translocation apparatus which comprises SecA, SecYEG and auxiliary proteins SecDF-YajC and YidC. It depends on Zn(2+) as a cofactor.

The protein resides in the cell inner membrane. Its subcellular location is the cytoplasm. It catalyses the reaction ATP + H2O + cellular proteinSide 1 = ADP + phosphate + cellular proteinSide 2.. Part of the Sec protein translocase complex. Interacts with the SecYEG preprotein conducting channel. Has a central role in coupling the hydrolysis of ATP to the transfer of proteins into and across the cell membrane, serving both as a receptor for the preprotein-SecB complex and as an ATP-driven molecular motor driving the stepwise translocation of polypeptide chains across the membrane. The sequence is that of Protein translocase subunit SecA from Burkholderia cenocepacia (strain ATCC BAA-245 / DSM 16553 / LMG 16656 / NCTC 13227 / J2315 / CF5610) (Burkholderia cepacia (strain J2315)).